A 69-amino-acid chain; its full sequence is Large ribosomal subunit protein bL31 (69 aa).

4 residues coordinate Zn(2+): cysteine 17, cysteine 19, cysteine 37, and cysteine 40.

This sequence belongs to the bacterial ribosomal protein bL31 family. Type A subfamily. As to quaternary structure, part of the 50S ribosomal subunit. Zn(2+) serves as cofactor.

Binds the 23S rRNA. The sequence is that of Large ribosomal subunit protein bL31 from Thermoanaerobacter pseudethanolicus (strain ATCC 33223 / 39E) (Clostridium thermohydrosulfuricum).